A 610-amino-acid polypeptide reads, in one-letter code: Zinc metalloproteinase-disintegrin-like halysase (610 aa).

An N-terminal signal peptide occupies residues 1–20 (MIQVLLVTICLAVFPYQGSS). Residues 21–182 (IILESGNVND…WESYEPIKKA (162 aa)) constitute a propeptide that is removed on maturation. The 197-residue stretch at 199 to 395 (KYVKLVMVAD…DMPQCILKKP (197 aa)) folds into the Peptidase M12B domain. N-linked (GlcNAc...) asparagine glycosylation is present at N218. 3 disulfides stabilise this stretch: C310–C390, C350–C374, and C352–C357. H335 provides a ligand contact to Zn(2+). Residue E336 is part of the active site. The Zn(2+) site is built by H339 and H345. Residues 403-488 (PPVCGNYFVE…AECTDRFQRN (86 aa)) form the Disintegrin domain. 6 residues coordinate Ca(2+): V405, N408, F410, E412, E415, and D418. Disulfide bonds link C406–C435, C417–C430, C419–C425, C429–C452, C443–C449, C448–C474, C461–C481, C468–C499, C492–C504, C511–C561, C526–C572, C539–C549, C556–C598, and C592–C603. The short motif at 467–469 (ECD) is the D/ECD-tripeptide element.

Belongs to the venom metalloproteinase (M12B) family. P-III subfamily. P-IIIa sub-subfamily. Monomer. Requires Zn(2+) as cofactor. Expressed by the venom gland.

The protein localises to the secreted. With respect to regulation, inhibited by EDTA and EGTA. Not inhibited by PMSF, antipain, pepstatin, and iodoacetamide. Functionally, strongly inhibits the collagen-induced human platelet aggregation (inhibition of alpha-2/beta-1 (ITGA2/ITGB1) integrin). Hydrolyzes the Aalpha-chain of fibrinogen, without cleavage of Bbeta- and gamma-chains. Degrades type IV collagen (but not types I, II and V), fibronectin and vitronectin and also integrins alpha-1/beta-1 (ITGA1/ITGB1) and alpha-5/beta/1 (ITGA5/ITGB1) (but not alpha-V/beta-3 (ITGAV/ITGB3) and alpha-V/beta-5 (ITGAV/ITGB5) integrins). Both metalloproteinase (peptidase M12B) and disintegrin-like domains (recombinantly expressed and named halydin) play characteristic roles to inhibit human platelet aggregation. Induces apoptosis and strongly inhibits proliferation of endothelial cells as well as adhesion of the cells to extracellular matrix proteins. The apoptosis is closely associated with activation of caspase-3 and decreased level of Bcl-X(L)/Bax. Apohalysase, which lacks metalloprotease activity, is also able to induce the apoptosis. Cleaves insulin B chain at '34-His-|-Leu-35', '37-Glu-|-Ala-38', '38-Ala-|-Leu-39', '39-Leu-|-Tyr-40', '40-Tyr-|-Leu-41', '47-Gly-|-Phe-48' and '48-Phe-|-Phe-49' bonds. The chain is Zinc metalloproteinase-disintegrin-like halysase from Gloydius halys (Chinese water mocassin).